Consider the following 325-residue polypeptide: Replication factor C small subunit (325 aa).

ATP is bound at residue 44-51 (GPPGTGKT).

It belongs to the activator 1 small subunits family. RfcS subfamily. Heteromultimer composed of small subunits (RfcS) and large subunits (RfcL).

Its function is as follows. Part of the RFC clamp loader complex which loads the PCNA sliding clamp onto DNA. The protein is Replication factor C small subunit of Thermofilum pendens (strain DSM 2475 / Hrk 5).